The primary structure comprises 757 residues: ATP-dependent RNA helicase mak5 (757 aa).

Basic and acidic residues-rich tracts occupy residues 1-10 (MGQKRQRDQK) and 71-89 (DIIR…KEPE). Disordered regions lie at residues 1 to 38 (MGQK…WDGI) and 66 to 161 (EIEG…SKED). Acidic residues predominate over residues 95–107 (SDDEWEGFGDDDQ). 2 stretches are compositionally biased toward basic and acidic residues: residues 112 to 136 (EESK…SKNA) and 144 to 161 (AKDA…SKED). The short motif at 184 to 212 (SAWESLGLSPEILAGISKMKFTTPTSVQK) is the Q motif element. The Helicase ATP-binding domain maps to 215–424 (IPPILDGRDV…AGKGKWTGGD (210 aa)). Position 228–235 (228–235 (ASTGSGKT)) interacts with ATP. A DEAD box motif is present at residues 350–353 (DEAD). Residues 460 to 626 (NLKEGIVECA…KVPLESLELD (167 aa)) form the Helicase C-terminal domain. A disordered region spans residues 678–704 (NAAARGRGRGRGRQERERKAGSTSKGE).

This sequence belongs to the DEAD box helicase family. DDX24/MAK5 subfamily.

It localises to the nucleus. It is found in the nucleolus. The catalysed reaction is ATP + H2O = ADP + phosphate + H(+). Its function is as follows. ATP-binding RNA helicase involved in the biogenesis of 60S ribosomal subunits and is required for the normal formation of 25S and 5.8S rRNAs. In Aspergillus oryzae (strain ATCC 42149 / RIB 40) (Yellow koji mold), this protein is ATP-dependent RNA helicase mak5 (mak5).